A 172-amino-acid polypeptide reads, in one-letter code: Translationally-controlled tumor protein (172 aa).

The TCTP domain maps to methionine 1–cysteine 172. Residue serine 46 is modified to Phosphoserine; by PLK1. Serine 53 is subject to Phosphoserine. Position 64 is a phosphoserine; by PLK1 (serine 64). Residues valine 70–cysteine 172 are required for reduction of TSC22D1 protein stability.

It belongs to the TCTP family. In terms of assembly, homodimer. Interacts with STEAP3. Interacts with TSC22D1; interaction results in the destabilization of TSC22D1 protein.

Its subcellular location is the cytoplasm. In terms of biological role, involved in calcium binding and microtubule stabilization. Acts as a negative regulator of TSC22D1-mediated apoptosis, via interaction with and destabilization of TSC22D1 protein. This is Translationally-controlled tumor protein (TPT1) from Oryctolagus cuniculus (Rabbit).